Here is a 29-residue protein sequence, read N- to C-terminus: Cyclotide cter-L (29 aa).

The cyclopeptide (His-Asp) cross-link spans 1–29; that stretch reads HEPCGESCVFIPCITTVVGCSCKNKVCYD. Disulfide bonds link C4/C20, C8/C22, and C13/C27.

In terms of processing, contains 3 disulfide bonds. This is a cyclic peptide.

Probably participates in a plant defense mechanism. The polypeptide is Cyclotide cter-L (Clitoria ternatea (Butterfly pea)).